The following is a 393-amino-acid chain: Major outer membrane porin, serovar L1 (393 aa).

The N-terminal stretch at 1–22 is a signal peptide; that stretch reads MKKLLKSVLVFAALSSASSLQA.

It belongs to the chlamydial porin (CP) (TC 1.B.2) family. In terms of assembly, part of a disulfide cross-linked outer membrane complex (COMC) composed of the major outer membrane porin (MOMP), the small cysteine-rich protein (OmcA) and the large cysteine-rich periplasmic protein (OmcB).

The protein resides in the cell outer membrane. In terms of biological role, in elementary bodies (EBs, the infectious stage, which is able to survive outside the host cell) provides the structural integrity of the outer envelope through disulfide cross-links with the small cysteine-rich protein and the large cysteine-rich periplasmic protein. It has been described in publications as the Sarkosyl-insoluble COMC (Chlamydia outer membrane complex), and serves as the functional equivalent of peptidoglycan. Its function is as follows. Permits diffusion of specific solutes through the outer membrane. This Chlamydia trachomatis protein is Major outer membrane porin, serovar L1 (ompA).